A 396-amino-acid polypeptide reads, in one-letter code: Tryptophan synthase beta chain (396 aa).

The residue at position 88 (Lys-88) is an N6-(pyridoxal phosphate)lysine.

Belongs to the TrpB family. As to quaternary structure, tetramer of two alpha and two beta chains. The cofactor is pyridoxal 5'-phosphate.

The catalysed reaction is (1S,2R)-1-C-(indol-3-yl)glycerol 3-phosphate + L-serine = D-glyceraldehyde 3-phosphate + L-tryptophan + H2O. It functions in the pathway amino-acid biosynthesis; L-tryptophan biosynthesis; L-tryptophan from chorismate: step 5/5. The beta subunit is responsible for the synthesis of L-tryptophan from indole and L-serine. The protein is Tryptophan synthase beta chain of Shewanella sp. (strain MR-7).